Reading from the N-terminus, the 519-residue chain is ATP synthase subunit alpha, mitochondrial (519 aa).

188 to 195 contributes to the ATP binding site; that stretch reads GDRQTGKS.

It belongs to the ATPase alpha/beta chains family. F-type ATPases have 2 components, CF(1) - the catalytic core - and CF(0) - the membrane proton channel. CF(1) has five subunits: alpha(3), beta(3), gamma(1), delta(1), epsilon(1). CF(0) has three main subunits: a, b and c.

The protein resides in the mitochondrion. It localises to the mitochondrion inner membrane. Its function is as follows. Mitochondrial membrane ATP synthase (F(1)F(0) ATP synthase or Complex V) produces ATP from ADP in the presence of a proton gradient across the membrane which is generated by electron transport complexes of the respiratory chain. F-type ATPases consist of two structural domains, F(1) - containing the extramembraneous catalytic core, and F(0) - containing the membrane proton channel, linked together by a central stalk and a peripheral stalk. During catalysis, ATP synthesis in the catalytic domain of F(1) is coupled via a rotary mechanism of the central stalk subunits to proton translocation. Subunits alpha and beta form the catalytic core in F(1). Rotation of the central stalk against the surrounding alpha(3)beta(3) subunits leads to hydrolysis of ATP in three separate catalytic sites on the beta subunits. Subunit alpha does not bear the catalytic high-affinity ATP-binding sites. The chain is ATP synthase subunit alpha, mitochondrial (atp1) from Dictyostelium citrinum (Slime mold).